We begin with the raw amino-acid sequence, 614 residues long: Dihydroxy-acid dehydratase (614 aa).

Mg(2+) is bound at residue D81. C122 contacts [2Fe-2S] cluster. Mg(2+) contacts are provided by D123 and K124. At K124 the chain carries N6-carboxylysine. Position 195 (C195) interacts with [2Fe-2S] cluster. E491 contributes to the Mg(2+) binding site. S517 acts as the Proton acceptor in catalysis.

Belongs to the IlvD/Edd family. In terms of assembly, homodimer. The cofactor is [2Fe-2S] cluster. Mg(2+) serves as cofactor.

It catalyses the reaction (2R)-2,3-dihydroxy-3-methylbutanoate = 3-methyl-2-oxobutanoate + H2O. The enzyme catalyses (2R,3R)-2,3-dihydroxy-3-methylpentanoate = (S)-3-methyl-2-oxopentanoate + H2O. Its pathway is amino-acid biosynthesis; L-isoleucine biosynthesis; L-isoleucine from 2-oxobutanoate: step 3/4. The protein operates within amino-acid biosynthesis; L-valine biosynthesis; L-valine from pyruvate: step 3/4. Functions in the biosynthesis of branched-chain amino acids. Catalyzes the dehydration of (2R,3R)-2,3-dihydroxy-3-methylpentanoate (2,3-dihydroxy-3-methylvalerate) into 2-oxo-3-methylpentanoate (2-oxo-3-methylvalerate) and of (2R)-2,3-dihydroxy-3-methylbutanoate (2,3-dihydroxyisovalerate) into 2-oxo-3-methylbutanoate (2-oxoisovalerate), the penultimate precursor to L-isoleucine and L-valine, respectively. The polypeptide is Dihydroxy-acid dehydratase (Rhodopseudomonas palustris (strain BisA53)).